A 170-amino-acid chain; its full sequence is NADPH-dependent 7-cyano-7-deazaguanine reductase (170 aa).

Cys58 (thioimide intermediate) is an active-site residue. Residue Asp65 is the Proton donor of the active site. Residues 80-82 (VES) and 99-100 (HE) contribute to the substrate site.

The protein belongs to the GTP cyclohydrolase I family. QueF type 1 subfamily.

It localises to the cytoplasm. It catalyses the reaction 7-aminomethyl-7-carbaguanine + 2 NADP(+) = 7-cyano-7-deazaguanine + 2 NADPH + 3 H(+). It functions in the pathway tRNA modification; tRNA-queuosine biosynthesis. Its function is as follows. Catalyzes the NADPH-dependent reduction of 7-cyano-7-deazaguanine (preQ0) to 7-aminomethyl-7-deazaguanine (preQ1). The protein is NADPH-dependent 7-cyano-7-deazaguanine reductase of Bdellovibrio bacteriovorus (strain ATCC 15356 / DSM 50701 / NCIMB 9529 / HD100).